We begin with the raw amino-acid sequence, 135 residues long: MNSCASINDEVITKYNELILGHISKGIIIKFSDDFKEVVFEDSFNGESFEDYINKFPQDDCRYGVYDFSYMDNKENKKNKIFFISWCPVETKIKNKIVHTATEQSIYKKLVGIDAIIKATDNTEISQSLVEERCK.

Residues 3-135 form the ADF-H domain; the sequence is SCASINDEVI…SQSLVEERCK (133 aa).

The protein belongs to the actin-binding proteins ADF family.

The protein localises to the cytoplasm. It localises to the cytoskeleton. Controls actin polymerization and depolymerization. This chain is Cofilin-4 (cofE), found in Dictyostelium discoideum (Social amoeba).